The sequence spans 387 residues: Mannitol-1-phosphate 5-dehydrogenase (387 aa).

3–14 is an NAD(+) binding site; the sequence is ALHFGAGNIGRG.

Belongs to the mannitol dehydrogenase family.

The enzyme catalyses D-mannitol 1-phosphate + NAD(+) = beta-D-fructose 6-phosphate + NADH + H(+). In Yersinia pseudotuberculosis serotype O:3 (strain YPIII), this protein is Mannitol-1-phosphate 5-dehydrogenase.